The chain runs to 452 residues: Nuclear distribution protein nudF 2 (452 aa).

A coiled-coil region spans residues 76–101 (ALQILDLESKVAGLQAELSSLTLTSR). 7 WD repeats span residues 123–164 (SHRD…RTLK), 166–206 (HIRA…ANIR), 210–250 (GHDH…CVKV), 253–292 (SSDA…QKSA), 295–355 (GHEN…IKTL), 357–396 (GHDN…KLVK), and 401–449 (AHSH…SCVR).

Belongs to the WD repeat LIS1/nudF family. Self-associates. Interacts with nudE and dynein.

The protein resides in the cytoplasm. It is found in the cytoskeleton. Its subcellular location is the spindle pole. Functionally, positively regulates the activity of the minus-end directed microtubule motor protein dynein. May enhance dynein-mediated microtubule sliding by targeting dynein to the microtubule plus end. Required for nuclear migration during vegetative growth as well as development. Required for retrograde early endosome (EE) transport from the hyphal tip. Required for localization of dynein to the mitotic spindle poles. Recruits additional proteins to the dynein complex at SPBs. This is Nuclear distribution protein nudF 2 from Talaromyces marneffei (strain ATCC 18224 / CBS 334.59 / QM 7333) (Penicillium marneffei).